Consider the following 147-residue polypeptide: MVHLTDAEKSAVSCLWAKVNPDEVGGEALGRLLVVYPWTQRYFDSFGDLSSASAIMGNPKVKAHGKKVITAFNEGLKNLDNLKGTFASLSELHCDKLHVDPENFRLLGNAIVIVLGHHLGKDFTPAAQAAFQKVVAGVATALAHKYH.

Position 2 is an N-acetylvaline (Val-2). The region spanning 3–147 (HLTDAEKSAV…VATALAHKYH (145 aa)) is the Globin domain. At Lys-18 the chain carries N6-succinyllysine. Residue Tyr-42 is modified to Phosphotyrosine. Phosphoserine is present on residues Ser-45, Ser-51, and Ser-53. An N6-succinyllysine modification is found at Lys-60. Heme b is bound by residues His-64 and His-93. Arg-105 carries the post-translational modification Asymmetric dimethylarginine. Thr-124 bears the Phosphothreonine mark.

This sequence belongs to the globin family. In terms of assembly, heterotetramer of two alpha chains and two beta chains. In terms of tissue distribution, red blood cells.

Its function is as follows. Involved in oxygen transport from the lung to the various peripheral tissues. The sequence is that of Hemoglobin subunit beta-2 (Hbb-b2) from Mus musculus (Mouse).